A 180-amino-acid chain; its full sequence is Nucleoplasmin-3 (180 aa).

The residue at position 2 (A2) is an N-acetylalanine. 2 positions are modified to phosphoserine: S13 and S16. An Omega-N-methylarginine modification is found at R27. Residues 141-180 form a disordered region; sequence TMSNDVSEEESEEEEEEEDSDEEEAELCPILPAKKQGGRP. Residues 146-166 show a composition bias toward acidic residues; it reads VSEEESEEEEEEEDSDEEEAE. Phosphoserine occurs at positions 147, 151, and 160.

The protein belongs to the nucleoplasmin family. Interacts with NPM (via N-terminus). Forms a pentamer with NPM at a ratio 4:1 (NPM3/NPM). Two pentamers form a decamer. Phosphorylated.

It localises to the nucleus. Its subcellular location is the nucleolus. Plays a role in the regulation of diverse cellular processes such as ribosome biogenesis, chromatin remodeling or protein chaperoning. Modulates the histone chaperone function and the RNA-binding activity of nucleolar phosphoprotein B23/NPM. Efficiently mediates chromatin remodeling when included in a pentamer containing NPM3 and NPM. The chain is Nucleoplasmin-3 (NPM3) from Pongo abelii (Sumatran orangutan).